Here is a 322-residue protein sequence, read N- to C-terminus: Biotin synthase (322 aa).

The 228-residue stretch at 39 to 266 (NQVQISSLLN…KSVVRLSAGR (228 aa)) folds into the Radical SAM core domain. [4Fe-4S] cluster contacts are provided by Cys-54, Cys-58, and Cys-61. The [2Fe-2S] cluster site is built by Cys-98, Cys-129, Cys-189, and Arg-261.

The protein belongs to the radical SAM superfamily. Biotin synthase family. In terms of assembly, homodimer. [4Fe-4S] cluster serves as cofactor. [2Fe-2S] cluster is required as a cofactor.

The catalysed reaction is (4R,5S)-dethiobiotin + (sulfur carrier)-SH + 2 reduced [2Fe-2S]-[ferredoxin] + 2 S-adenosyl-L-methionine = (sulfur carrier)-H + biotin + 2 5'-deoxyadenosine + 2 L-methionine + 2 oxidized [2Fe-2S]-[ferredoxin]. It participates in cofactor biosynthesis; biotin biosynthesis; biotin from 7,8-diaminononanoate: step 2/2. Catalyzes the conversion of dethiobiotin (DTB) to biotin by the insertion of a sulfur atom into dethiobiotin via a radical-based mechanism. The polypeptide is Biotin synthase (Vesicomyosocius okutanii subsp. Calyptogena okutanii (strain HA)).